A 410-amino-acid chain; its full sequence is BTB/POZ and MATH domain-containing protein 5 (410 aa).

Residues 1–24 (MSESVIQGSNPDRVLSPTSSKSVT) are disordered. The MATH domain occupies 28–162 (NGSHQFVIQG…DDCLIINCTV (135 aa)). One can recognise a BTB domain in the interval 198 to 264 (SDITFNIAGE…MYKDSLPEDV (67 aa)).

Belongs to the Tdpoz family. As to quaternary structure, heterodimer with BPM1 and BPM3. Interacts with RAP2-4. Binds to MYB56 at the promoter of FLOWERING LOCUS T (FT). As to expression, ubiquitous.

Its subcellular location is the nucleus. It localises to the cytoplasm. It functions in the pathway protein modification; protein ubiquitination. Functionally, may act as a substrate-specific adapter of an E3 ubiquitin-protein ligase complex (CUL3-RBX1-BTB) which mediates the ubiquitination and subsequent proteasomal degradation of target proteins. This is BTB/POZ and MATH domain-containing protein 5 (BPM5) from Arabidopsis thaliana (Mouse-ear cress).